Here is a 328-residue protein sequence, read N- to C-terminus: Peroxidase 63 (328 aa).

The N-terminal stretch at 1–27 is a signal peptide; the sequence is MAEQSQLKNLTIILLLLCLSFQSLSFA. Disulfide bonds link Cys41/Cys122, Cys74/Cys79, Cys128/Cys324, and Cys207/Cys234. The Proton acceptor role is filled by His72. Residues Asp73, Gly78, Asp80, and Ser82 each contribute to the Ca(2+) site. Residue Pro170 coordinates substrate. Residue His200 participates in heme b binding. Thr201 contacts Ca(2+). Residues Asn217 and Asn218 are each glycosylated (N-linked (GlcNAc...) asparagine). Residues Asp248, Thr251, and Asp256 each coordinate Ca(2+).

Belongs to the peroxidase family. Classical plant (class III) peroxidase subfamily. Requires heme b as cofactor. Ca(2+) serves as cofactor.

Its subcellular location is the secreted. It carries out the reaction 2 a phenolic donor + H2O2 = 2 a phenolic radical donor + 2 H2O. In terms of biological role, removal of H(2)O(2), oxidation of toxic reductants, biosynthesis and degradation of lignin, suberization, auxin catabolism, response to environmental stresses such as wounding, pathogen attack and oxidative stress. These functions might be dependent on each isozyme/isoform in each plant tissue. The protein is Peroxidase 63 (PER63) of Arabidopsis thaliana (Mouse-ear cress).